Reading from the N-terminus, the 798-residue chain is Integrin beta-5 (798 aa).

The signal sequence occupies residues 1 to 23; it reads MPRVPATLYACLLGLCALVPRLA. The Extracellular portion of the chain corresponds to 24–719; that stretch reads GLNICTSGSA…REPECGSAPN (696 aa). The PSI domain occupies 27-76; sequence ICTSGSATSCEECLLIHPKCAWCSKEYFGNPRSITSRCDLKANLIRNGCE. 19 disulfides stabilise this stretch: cysteine 28/cysteine 46, cysteine 36/cysteine 463, cysteine 39/cysteine 64, cysteine 49/cysteine 75, cysteine 202/cysteine 211, cysteine 259/cysteine 300, cysteine 401/cysteine 413, cysteine 433/cysteine 461, cysteine 465/cysteine 484, cysteine 476/cysteine 487, cysteine 489/cysteine 498, cysteine 500/cysteine 530, cysteine 513/cysteine 528, cysteine 522/cysteine 533, cysteine 535/cysteine 548, cysteine 550/cysteine 571, cysteine 555/cysteine 569, cysteine 563/cysteine 574, and cysteine 576/cysteine 585. Positions 136 to 378 constitute a VWFA domain; the sequence is YPVDLYYLMD…QLIINAYSSI (243 aa). Mg(2+)-binding residues include serine 147 and serine 149. The Ca(2+) site is built by serine 149, aspartate 152, aspartate 153, and aspartate 184. The Ca(2+) site is built by asparagine 242, aspartate 244, proline 246, and glutamate 247. Glutamate 247 contacts Mg(2+). The N-linked (GlcNAc...) asparagine glycan is linked to asparagine 347. Glycine 362 provides a ligand contact to Ca(2+). 2 N-linked (GlcNAc...) asparagine glycosylation sites follow: asparagine 460 and asparagine 479. 4 consecutive I-EGF domains span residues 465–499, 500–549, 550–586, and 587–626; these read CSTGLEPNSARCSGNGTYTCGLCECDPGYLGTRCE, CQEG…PFCE, CDSFSCARNKGVLCSGHGECHCGECKCHAGYIGDNCN, and CSTDVSTCKAKDGQICSDRGRCVCGQCQCTEPGAFGETCE. Asparagine 505 carries N-linked (GlcNAc...) asparagine glycosylation. N-linked (GlcNAc...) asparagine glycosylation occurs at asparagine 586. Disulfide bonds link cysteine 587-cysteine 610, cysteine 594-cysteine 608, cysteine 602-cysteine 613, cysteine 615-cysteine 625, cysteine 628-cysteine 631, cysteine 635-cysteine 682, cysteine 641-cysteine 661, cysteine 644-cysteine 657, and cysteine 690-cysteine 714. 2 N-linked (GlcNAc...) asparagine glycosylation sites follow: asparagine 654 and asparagine 705. The chain crosses the membrane as a helical span at residues 720 to 742; that stretch reads AMTILLAVVGSILLIGMALLAIW. Residues 743–798 are Cytoplasmic-facing; sequence KLLVTIHDRREFAKFQSERSRARYEMASNPLYRKPISTHTVDFAFNKFNKSYNGSV. Serine 770 is subject to Phosphoserine.

This sequence belongs to the integrin beta chain family. In terms of assembly, heterodimer of an alpha and a beta subunit. Beta-5 (ITGB5) associates with alpha-V (ITGAV). Interacts with MYO10. Interacts with DAB2. Integrin ITGAV:ITGB5 interacts with FBLN5 (via N-terminus). ITGAV:ITGB5 interacts with CCN3. Interacts with tensin TNS3; TNS3 also interacts with PEAK1, thus acting as an adapter molecule to bridge the association of PEAK1 with ITGB5.

The protein localises to the cell membrane. Functionally, integrin alpha-V/beta-5 (ITGAV:ITGB5) is a receptor for fibronectin. It recognizes the sequence R-G-D in its ligand. The polypeptide is Integrin beta-5 (Itgb5) (Mus musculus (Mouse)).